The sequence spans 104 residues: COX assembly mitochondrial protein 1 (104 aa).

One can recognise a CHCH domain in the interval 10–52; that stretch reads QKQCADLIRALEECHKSFGKFFGECNTIKYELKACLTKDRNDK. Short sequence motifs (cx9C motif) lie at residues 13–23 and 34–44; these read CADLIRALEEC and CNTIKYELKAC. Cystine bridges form between cysteine 13-cysteine 44 and cysteine 23-cysteine 34.

It belongs to the CMC family.

The protein localises to the mitochondrion inner membrane. In terms of biological role, required for mitochondrial cytochrome c oxidase (COX) assembly and respiration. The polypeptide is COX assembly mitochondrial protein 1 (cmc1) (Schizosaccharomyces pombe (strain 972 / ATCC 24843) (Fission yeast)).